A 397-amino-acid chain; its full sequence is Phosphoglycerate kinase (397 aa).

Substrate contacts are provided by residues aspartate 21–asparagine 23, arginine 36, histidine 59–arginine 62, arginine 119, and arginine 152. ATP contacts are provided by residues lysine 202, glutamate 324, and glycine 354–threonine 357.

This sequence belongs to the phosphoglycerate kinase family. In terms of assembly, monomer.

The protein localises to the cytoplasm. The enzyme catalyses (2R)-3-phosphoglycerate + ATP = (2R)-3-phospho-glyceroyl phosphate + ADP. The protein operates within carbohydrate degradation; glycolysis; pyruvate from D-glyceraldehyde 3-phosphate: step 2/5. This Cereibacter sphaeroides (strain ATCC 17029 / ATH 2.4.9) (Rhodobacter sphaeroides) protein is Phosphoglycerate kinase.